A 329-amino-acid polypeptide reads, in one-letter code: Beta-1,3-galactosyltransferase 6 (329 aa).

Residues 1-11 lie on the Cytoplasmic side of the membrane; sequence MKLLRRAWRRR. The chain crosses the membrane as a helical; Signal-anchor for type II membrane protein span at residues 12-34; it reads AALGLGTLALCGAALLYLARCAA. Over 35–329 the chain is Lumenal; the sequence is EPGDPRAMSG…QCCQRREGIP (295 aa). Asn131 carries N-linked (GlcNAc...) asparagine glycosylation.

It belongs to the glycosyltransferase 31 family. It depends on Mn(2+) as a cofactor. In terms of tissue distribution, ubiquitous.

It is found in the golgi apparatus. Its subcellular location is the golgi stack membrane. It carries out the reaction 3-O-(beta-D-galactosyl-(1-&gt;4)-beta-D-xylosyl)-L-seryl-[protein] + UDP-alpha-D-galactose = 3-O-(beta-D-galactosyl-(1-&gt;3)-beta-D-galactosyl-(1-&gt;4)-beta-D-xylosyl)-L-seryl-[protein] + UDP + H(+). It participates in glycan metabolism; chondroitin sulfate biosynthesis. It functions in the pathway glycan metabolism; heparan sulfate biosynthesis. Its function is as follows. Beta-1,3-galactosyltransferase that transfers galactose from UDP-galactose to substrates with a terminal beta-linked galactose residue. Has a preference for galactose-beta-1,4-xylose that is found in the linker region of glycosaminoglycans, such as heparan sulfate and chondroitin sulfate. Has no activity towards substrates with terminal glucosamine or galactosamine residues. In Homo sapiens (Human), this protein is Beta-1,3-galactosyltransferase 6 (B3GALT6).